Here is a 316-residue protein sequence, read N- to C-terminus: 4-hydroxy-3-methylbut-2-enyl diphosphate reductase (316 aa).

Cys12 contacts [4Fe-4S] cluster. Residues His41 and His74 each coordinate (2E)-4-hydroxy-3-methylbut-2-enyl diphosphate. Positions 41 and 74 each coordinate dimethylallyl diphosphate. Positions 41 and 74 each coordinate isopentenyl diphosphate. Residue Cys96 participates in [4Fe-4S] cluster binding. His124 serves as a coordination point for (2E)-4-hydroxy-3-methylbut-2-enyl diphosphate. His124 contributes to the dimethylallyl diphosphate binding site. An isopentenyl diphosphate-binding site is contributed by His124. Residue Glu126 is the Proton donor of the active site. Thr169 contributes to the (2E)-4-hydroxy-3-methylbut-2-enyl diphosphate binding site. A [4Fe-4S] cluster-binding site is contributed by Cys199. Residues Ser227, Ser228, Asn229, and Ser271 each contribute to the (2E)-4-hydroxy-3-methylbut-2-enyl diphosphate site. Dimethylallyl diphosphate is bound by residues Ser227, Ser228, Asn229, and Ser271. Ser227, Ser228, Asn229, and Ser271 together coordinate isopentenyl diphosphate.

It belongs to the IspH family. Requires [4Fe-4S] cluster as cofactor.

The enzyme catalyses isopentenyl diphosphate + 2 oxidized [2Fe-2S]-[ferredoxin] + H2O = (2E)-4-hydroxy-3-methylbut-2-enyl diphosphate + 2 reduced [2Fe-2S]-[ferredoxin] + 2 H(+). It carries out the reaction dimethylallyl diphosphate + 2 oxidized [2Fe-2S]-[ferredoxin] + H2O = (2E)-4-hydroxy-3-methylbut-2-enyl diphosphate + 2 reduced [2Fe-2S]-[ferredoxin] + 2 H(+). It functions in the pathway isoprenoid biosynthesis; dimethylallyl diphosphate biosynthesis; dimethylallyl diphosphate from (2E)-4-hydroxy-3-methylbutenyl diphosphate: step 1/1. Its pathway is isoprenoid biosynthesis; isopentenyl diphosphate biosynthesis via DXP pathway; isopentenyl diphosphate from 1-deoxy-D-xylulose 5-phosphate: step 6/6. Functionally, catalyzes the conversion of 1-hydroxy-2-methyl-2-(E)-butenyl 4-diphosphate (HMBPP) into a mixture of isopentenyl diphosphate (IPP) and dimethylallyl diphosphate (DMAPP). Acts in the terminal step of the DOXP/MEP pathway for isoprenoid precursor biosynthesis. The sequence is that of 4-hydroxy-3-methylbut-2-enyl diphosphate reductase from Stenotrophomonas maltophilia (strain K279a).